We begin with the raw amino-acid sequence, 328 residues long: Tetraacyldisaccharide 4'-kinase (328 aa).

55 to 62 (TAGGNGKT) serves as a coordination point for ATP.

This sequence belongs to the LpxK family.

The enzyme catalyses a lipid A disaccharide + ATP = a lipid IVA + ADP + H(+). Its pathway is glycolipid biosynthesis; lipid IV(A) biosynthesis; lipid IV(A) from (3R)-3-hydroxytetradecanoyl-[acyl-carrier-protein] and UDP-N-acetyl-alpha-D-glucosamine: step 6/6. Transfers the gamma-phosphate of ATP to the 4'-position of a tetraacyldisaccharide 1-phosphate intermediate (termed DS-1-P) to form tetraacyldisaccharide 1,4'-bis-phosphate (lipid IVA). The polypeptide is Tetraacyldisaccharide 4'-kinase (Escherichia coli (strain K12 / MC4100 / BW2952)).